The following is a 315-amino-acid chain: Methionyl-tRNA formyltransferase (315 aa).

Residue 109-112 (SLLP) participates in (6S)-5,6,7,8-tetrahydrofolate binding.

This sequence belongs to the Fmt family.

The enzyme catalyses L-methionyl-tRNA(fMet) + (6R)-10-formyltetrahydrofolate = N-formyl-L-methionyl-tRNA(fMet) + (6S)-5,6,7,8-tetrahydrofolate + H(+). In terms of biological role, attaches a formyl group to the free amino group of methionyl-tRNA(fMet). The formyl group appears to play a dual role in the initiator identity of N-formylmethionyl-tRNA by promoting its recognition by IF2 and preventing the misappropriation of this tRNA by the elongation apparatus. In Lachnospira eligens (strain ATCC 27750 / DSM 3376 / VPI C15-48 / C15-B4) (Eubacterium eligens), this protein is Methionyl-tRNA formyltransferase.